The chain runs to 774 residues: Protein translocase subunit SecA (774 aa).

ATP contacts are provided by residues Q66, 84–88, and D474; that span reads GEGKS.

Belongs to the SecA family.

The protein localises to the plastid. The protein resides in the chloroplast stroma. Its subcellular location is the chloroplast thylakoid membrane. The catalysed reaction is ATP + H2O + cellular proteinSide 1 = ADP + phosphate + cellular proteinSide 2.. Its function is as follows. Has a central role in coupling the hydrolysis of ATP to the transfer of proteins across the thylakoid membrane. This Cyanidioschyzon merolae (strain NIES-3377 / 10D) (Unicellular red alga) protein is Protein translocase subunit SecA.